A 435-amino-acid polypeptide reads, in one-letter code: Origin recognition complex subunit 5 (435 aa).

An ATP-binding site is contributed by 37–44; it reads GHTASGKT.

It belongs to the ORC5 family. Component of ORC, a complex composed of at least 6 subunits: ORC1, ORC2, ORC3, ORC4, ORC5 and ORC6. ORC is regulated in a cell-cycle dependent manner. It is sequentially assembled at the exit from anaphase of mitosis and disassembled as cells enter S phase. Multi-mono-ubiquitinated by OBI1; ubiquitination is important for efficient DNA replication origin site activation. Ubiquitination levels are low in mitotic and early G1-phAse cells and are induced in late G1-/early S-phase, peaking in S-phase and decrease toward the end of the cell cycle. As to expression, abundant in spleen, ovary, prostate, testis, and colon mucosa.

It localises to the nucleus. The protein resides in the chromosome. Functionally, component of the origin recognition complex (ORC) that binds origins of replication. DNA-binding is ATP-dependent. The specific DNA sequences that define origins of replication have not been identified yet. ORC is required to assemble the pre-replication complex necessary to initiate DNA replication. This chain is Origin recognition complex subunit 5 (ORC5), found in Homo sapiens (Human).